The chain runs to 368 residues: 3-dehydroquinate synthase (368 aa).

NAD(+) is bound by residues 71–76 (DGEAAK), 105–109 (GATTD), 129–130 (TT), Lys142, and Lys151. Zn(2+)-binding residues include Glu184, His247, and His263.

The protein belongs to the sugar phosphate cyclases superfamily. Dehydroquinate synthase family. It depends on Co(2+) as a cofactor. Zn(2+) serves as cofactor. The cofactor is NAD(+).

It is found in the cytoplasm. The enzyme catalyses 7-phospho-2-dehydro-3-deoxy-D-arabino-heptonate = 3-dehydroquinate + phosphate. Its pathway is metabolic intermediate biosynthesis; chorismate biosynthesis; chorismate from D-erythrose 4-phosphate and phosphoenolpyruvate: step 2/7. In terms of biological role, catalyzes the conversion of 3-deoxy-D-arabino-heptulosonate 7-phosphate (DAHP) to dehydroquinate (DHQ). In Thermobifida fusca (strain YX), this protein is 3-dehydroquinate synthase.